A 1353-amino-acid polypeptide reads, in one-letter code: Adenylate cyclase type 9 (1353 aa).

Disordered regions lie at residues 1–27 (MASS…DSNS) and 51–73 (SSSC…GGRL). The Cytoplasmic segment spans residues 1–117 (MASSPHQQLL…CFPQTQRRFR (117 aa)). Positions 16–27 (EVSCDSSGDSNS) are enriched in polar residues. Residues 51–66 (SSSCSSSGDSGGLPRR) show a composition bias toward low complexity. The chain crosses the membrane as a helical span at residues 118-138 (YALFYVGFACLLWSIYFAVHM). The Extracellular segment spans residues 139–141 (KSK). A helical transmembrane segment spans residues 142–162 (VIVMVVPALCFLVVCVGFFLF). The Cytoplasmic segment spans residues 163 to 171 (TFTKLYARH). Residues 172–192 (YAWTSLALTLLVFALTLAAQF) traverse the membrane as a helical segment. Residues 193 to 215 (QVWTPLSGRVDSSNHTLTATPAD) lie on the Extracellular side of the membrane. N-linked (GlcNAc...) asparagine glycosylation occurs at asparagine 206. A helical membrane pass occupies residues 216–235 (TCLSQVGSFSICIEVLLLLY). Over 236-241 (TVMQLP) the chain is Cytoplasmic. Residues 242–259 (LYLSLFLGVVYSVLFETF) form a helical membrane-spanning segment. Residues 260–280 (GYHFRNEDCYPSPGPGALHWE) lie on the Extracellular side of the membrane. The helical transmembrane segment at 281-301 (LLSRALLHVCIHAIGIHLFVM) threads the bilayer. At 302-786 (SQVRSRSTFL…VKTFASATFS (485 aa)) the chain is on the cytoplasmic side. The tract at residues 349–375 (QGDEESENSVKRHATSSPKNRKKKSSI) is disordered. Positions 359 to 374 (KRHATSSPKNRKKKSS) are enriched in basic residues. Aspartate 399, isoleucine 400, and aspartate 443 together coordinate Mg(2+). Residues 399-404 (DIVGFT), 441-443 (LGD), and arginine 487 contribute to the ATP site. Disordered regions lie at residues 596–615 (DSRE…GSVS) and 641–685 (SEAG…EEKL). A phosphoserine mark is found at serine 610 and serine 613. Residues 661–676 (STKASGGPNSKTQNGL) are compositionally biased toward polar residues. Serine 688, serine 691, and serine 706 each carry phosphoserine. Residues 787 to 807 (SLLDVFLSTTVFLILSITCFL) traverse the membrane as a helical segment. The Extracellular segment spans residues 808–818 (KYGATATPPPP). Residues 819 to 839 (AALAVFGADLLLEVLSLIVSI) form a helical membrane-spanning segment. Over 840-867 (RMVFFLEDVMTCTKWLLEWIAGWLPRHC) the chain is Cytoplasmic. A helical transmembrane segment spans residues 868 to 888 (IGAILVSLPALAVYSHITSEF). The Extracellular segment spans residues 889–891 (ETN). A helical transmembrane segment spans residues 892 to 912 (IHVTMFTGSAVLVAVVHYCNF). Residues 913–920 (CQLSSWMR) are Cytoplasmic-facing. A helical transmembrane segment spans residues 921–941 (SSLATIVGAGLLLLLHISLCQ). Residues 942 to 975 (DSSIVMSPLDSAQNFSAQRNPCNSSVLQDGRRPA) lie on the Extracellular side of the membrane. Residues asparagine 955 and asparagine 964 are each glycosylated (N-linked (GlcNAc...) asparagine). A helical transmembrane segment spans residues 976–996 (SLIGKELILTFFLLLLLVWFL). Residues 997–1353 (NREFEVSYRL…LSKLNVSKSV (357 aa)) lie on the Cytoplasmic side of the membrane. Residues lysine 1108, 1185–1187 (DIW), 1192–1196 (NIASR), and lysine 1232 each bind ATP. Phosphoserine occurs at positions 1257, 1259, 1295, 1307, and 1332. The tract at residues 1290–1314 (KASLGSDDSTQAKEARLSSKRSWRE) is disordered. Positions 1299-1314 (TQAKEARLSSKRSWRE) are enriched in basic and acidic residues.

It belongs to the adenylyl cyclase class-4/guanylyl cyclase family. Mg(2+) serves as cofactor. It depends on Mn(2+) as a cofactor. Detected in brain, spleen, lung, liver and testis (at protein level). Detected in brain, especially in hippocampus, cerebellum and neocortex. Found in decreasing order in skeletal muscle, heart, adrenal gland, ovary and brain; and to a lesser extent, in kidney, liver, testis, lung, thymus and spleen.

The protein localises to the cell membrane. It catalyses the reaction ATP = 3',5'-cyclic AMP + diphosphate. With respect to regulation, insensitive to calcium/calmodulin, forskolin and somatostatin. Stimulated by beta-adrenergic receptor activation. Activity is down-regulated by calcium/calcineurin. Its function is as follows. Adenylyl cyclase that catalyzes the formation of the signaling molecule cAMP in response to activation of G protein-coupled receptors. Contributes to signaling cascades activated by CRH (corticotropin-releasing factor), corticosteroids and by beta-adrenergic receptors. This chain is Adenylate cyclase type 9 (Adcy9), found in Mus musculus (Mouse).